Consider the following 218-residue polypeptide: Putative receptor like protein 25 (218 aa).

Residues 1–178 lie on the Extracellular side of the membrane; that stretch reads MIYTKNAYGS…QEDAKVLNWK (178 aa). LRR repeat units follow at residues 34-58, 59-82, 83-106, and 108-131; these read LTLY…IGLL, KALI…MANL, IELE…LKTL, and FLGY…QITG. Residue Asn65 is glycosylated (N-linked (GlcNAc...) asparagine). N-linked (GlcNAc...) asparagine glycosylation is present at Asn113. The chain crosses the membrane as a helical span at residues 179–199; that stretch reads AVATGYGPGVFFGLAIAQIIA. Over 200-218 the chain is Cytoplasmic; the sequence is SYKPEWLVKIIGPNKRRNH.

It belongs to the RLP family.

The protein resides in the cell membrane. The protein is Putative receptor like protein 25 of Arabidopsis thaliana (Mouse-ear cress).